The chain runs to 308 residues: Glutaminase (308 aa).

S66, N117, E161, N168, Y192, Y244, and V262 together coordinate substrate.

Belongs to the glutaminase family. Homotetramer.

The enzyme catalyses L-glutamine + H2O = L-glutamate + NH4(+). The polypeptide is Glutaminase (Salmonella arizonae (strain ATCC BAA-731 / CDC346-86 / RSK2980)).